The sequence spans 191 residues: MSRIGKRPIPIPDKVAVTIDGSTVKVKGPKGELSQVLPPEVVVVQENSSLLVNRRDDSRPARQRHGLSRTLVANMVKGVTEGFRKNMQIVGVGYRLQVTGNKLAITAGYSHPVEIDLPKGISVEVDQKAVPIANSKSQQGFNFGVIGIDKQAVGDVAALIRAVRPLEPYKGKGIRYATETLRLKAGKTGKK.

Belongs to the universal ribosomal protein uL6 family. As to quaternary structure, part of the 50S ribosomal subunit.

Functionally, this protein binds to the 23S rRNA, and is important in its secondary structure. It is located near the subunit interface in the base of the L7/L12 stalk, and near the tRNA binding site of the peptidyltransferase center. This Cyanothece sp. (strain PCC 7425 / ATCC 29141) protein is Large ribosomal subunit protein uL6.